The sequence spans 350 residues: Galactokinase (350 aa).

Substrate is bound at residue 14–17 (EHTD). ATP-binding positions include Ser46 and 96–102 (GAGLSSS). The Mg(2+) site is built by Ser102 and Glu134. The active-site Proton acceptor is the Asp146. Tyr196 serves as a coordination point for substrate.

The protein belongs to the GHMP kinase family. GalK subfamily.

The protein resides in the cytoplasm. It catalyses the reaction alpha-D-galactose + ATP = alpha-D-galactose 1-phosphate + ADP + H(+). Its pathway is carbohydrate metabolism; galactose metabolism. Catalyzes the transfer of the gamma-phosphate of ATP to D-galactose to form alpha-D-galactose-1-phosphate (Gal-1-P). This chain is Galactokinase, found in Thermotoga neapolitana (strain ATCC 49049 / DSM 4359 / NBRC 107923 / NS-E).